The chain runs to 180 residues: Large ribosomal subunit protein uL6 (180 aa).

The protein belongs to the universal ribosomal protein uL6 family. As to quaternary structure, part of the 50S ribosomal subunit.

Functionally, this protein binds to the 23S rRNA, and is important in its secondary structure. It is located near the subunit interface in the base of the L7/L12 stalk, and near the tRNA binding site of the peptidyltransferase center. The sequence is that of Large ribosomal subunit protein uL6 from Clostridium botulinum (strain Eklund 17B / Type B).